The chain runs to 273 residues: 4-hydroxy-tetrahydrodipicolinate reductase 1 (273 aa).

NAD(+)-binding positions include 13-18 and glutamate 39; that span reads GAAGRM. Residue arginine 40 participates in NADP(+) binding. Residues 103–105 and 127–130 each bind NAD(+); these read GTT and SGNM. Histidine 161 acts as the Proton donor/acceptor in catalysis. Histidine 162 serves as a coordination point for (S)-2,3,4,5-tetrahydrodipicolinate. Lysine 165 functions as the Proton donor in the catalytic mechanism. Position 171–172 (171–172) interacts with (S)-2,3,4,5-tetrahydrodipicolinate; that stretch reads GT.

Belongs to the DapB family.

The protein localises to the cytoplasm. It catalyses the reaction (S)-2,3,4,5-tetrahydrodipicolinate + NAD(+) + H2O = (2S,4S)-4-hydroxy-2,3,4,5-tetrahydrodipicolinate + NADH + H(+). The catalysed reaction is (S)-2,3,4,5-tetrahydrodipicolinate + NADP(+) + H2O = (2S,4S)-4-hydroxy-2,3,4,5-tetrahydrodipicolinate + NADPH + H(+). Its pathway is amino-acid biosynthesis; L-lysine biosynthesis via DAP pathway; (S)-tetrahydrodipicolinate from L-aspartate: step 4/4. Functionally, catalyzes the conversion of 4-hydroxy-tetrahydrodipicolinate (HTPA) to tetrahydrodipicolinate. This Mesorhizobium japonicum (strain LMG 29417 / CECT 9101 / MAFF 303099) (Mesorhizobium loti (strain MAFF 303099)) protein is 4-hydroxy-tetrahydrodipicolinate reductase 1.